A 508-amino-acid chain; its full sequence is Endo-4-O-sulfatase (508 aa).

S84 is modified (3-oxoalanine (Ser)).

Belongs to the sulfatase family. The conversion to 3-oxoalanine (also known as C-formylglycine, FGly), of a serine or cysteine residue in prokaryotes and of a cysteine residue in eukaryotes, is critical for catalytic activity.

In terms of biological role, endosulfatase involved in the degradation of the glycosaminoglycans (GAGs) chondroitin sulfate (CS) and dermatan sulfate (DS). Efficiently hydrolyzes sulfate groups from a broad range of substrate size, including disaccharide to high molecular weight CS and DS polymers. Has a strict specificity for the 4-O-sulfate groups of galactosamine. GAG-specific sulfatases play a key role in the persistence of the major human gut symbiont B.thetaiotaomicron in the host gastrointestinal tract. In Bacteroides thetaiotaomicron (strain ATCC 29148 / DSM 2079 / JCM 5827 / CCUG 10774 / NCTC 10582 / VPI-5482 / E50), this protein is Endo-4-O-sulfatase.